Here is a 284-residue protein sequence, read N- to C-terminus: Adenylate kinase 1, chloroplastic (284 aa).

The N-terminal 36 residues, 1–36 (MARLVRVARSSSLFGFGNRFYSTSAEASHASSPSPF), are a transit peptide targeting the chloroplast. 61–66 (GVGKGT) is a binding site for ATP. Residues 81-110 (ATGDLVREELASSGPLSQKLSEIVNQGKLV) form an NMP region. Residues T82, R87, 108-110 (KLV), 138-141 (GFPR), and Q145 each bind AMP. Residues 174-222 (GRRTCSQCGKGFNVAHINLKGENGRPGISMDPLLPPHQCMSKLVTRADD) form an LID region. R175 provides a ligand contact to ATP. Positions 219 and 230 each coordinate AMP. G258 is a binding site for ATP.

The protein belongs to the adenylate kinase family. In terms of assembly, monomer. In terms of tissue distribution, highly expressed in flowers and at lower levels in roots, leaves and stems.

The protein localises to the plastid. It is found in the chloroplast stroma. The catalysed reaction is AMP + ATP = 2 ADP. Its function is as follows. Catalyzes the reversible transfer of the terminal phosphate group between ATP and AMP. Plays an important role in cellular energy homeostasis, adenine nucleotide metabolism and plant growth. The protein is Adenylate kinase 1, chloroplastic (ADK) of Arabidopsis thaliana (Mouse-ear cress).